The sequence spans 428 residues: UDP-N-acetylglucosamine 1-carboxyvinyltransferase 2 (428 aa).

22 to 23 (KN) is a binding site for phosphoenolpyruvate. Position 92 (Arg-92) interacts with UDP-N-acetyl-alpha-D-glucosamine. The Proton donor role is filled by Cys-116. A 2-(S-cysteinyl)pyruvic acid O-phosphothioketal modification is found at Cys-116. UDP-N-acetyl-alpha-D-glucosamine contacts are provided by residues 121-125 (RPIDQ), Asp-304, and Ile-326.

Belongs to the EPSP synthase family. MurA subfamily.

It is found in the cytoplasm. The catalysed reaction is phosphoenolpyruvate + UDP-N-acetyl-alpha-D-glucosamine = UDP-N-acetyl-3-O-(1-carboxyvinyl)-alpha-D-glucosamine + phosphate. Its pathway is cell wall biogenesis; peptidoglycan biosynthesis. Functionally, cell wall formation. Adds enolpyruvyl to UDP-N-acetylglucosamine. In Shouchella clausii (strain KSM-K16) (Alkalihalobacillus clausii), this protein is UDP-N-acetylglucosamine 1-carboxyvinyltransferase 2.